The primary structure comprises 306 residues: Large ribosomal subunit protein bL19m (306 aa).

Residues 34–43 show a composition bias toward basic and acidic residues; that stretch reads ENQEEQKKEA. Residues 34-53 are disordered; the sequence is ENQEEQKKEAPPTTPTSPVN.

The protein belongs to the bacterial ribosomal protein bL19 family. As to quaternary structure, component of the mitochondrial ribosome large subunit (39S) which comprises a 16S rRNA and about 50 distinct proteins.

The protein localises to the mitochondrion. This Drosophila melanogaster (Fruit fly) protein is Large ribosomal subunit protein bL19m (mRpL19).